Consider the following 320-residue polypeptide: tRNA U34 carboxymethyltransferase (320 aa).

Carboxy-S-adenosyl-L-methionine is bound by residues lysine 89, tryptophan 103, lysine 108, glycine 127, 177–178, methionine 193, tyrosine 197, and arginine 312; that span reads LE.

This sequence belongs to the class I-like SAM-binding methyltransferase superfamily. CmoB family. As to quaternary structure, homotetramer.

The enzyme catalyses carboxy-S-adenosyl-L-methionine + 5-hydroxyuridine(34) in tRNA = 5-carboxymethoxyuridine(34) in tRNA + S-adenosyl-L-homocysteine + H(+). Its function is as follows. Catalyzes carboxymethyl transfer from carboxy-S-adenosyl-L-methionine (Cx-SAM) to 5-hydroxyuridine (ho5U) to form 5-carboxymethoxyuridine (cmo5U) at position 34 in tRNAs. The protein is tRNA U34 carboxymethyltransferase of Stutzerimonas stutzeri (strain A1501) (Pseudomonas stutzeri).